The following is a 101-amino-acid chain: NAD(P)H-quinone oxidoreductase subunit 4L, chloroplastic (101 aa).

The next 2 membrane-spanning stretches (helical) occupy residues 2-22 (MFEHVLVLSVYLFSIGIYGLI) and 61-81 (IFSIFVIAVAAAEAAIGLAIV).

This sequence belongs to the complex I subunit 4L family. As to quaternary structure, NDH is composed of at least 16 different subunits, 5 of which are encoded in the nucleus.

The protein localises to the plastid. It is found in the chloroplast thylakoid membrane. The enzyme catalyses a plastoquinone + NADH + (n+1) H(+)(in) = a plastoquinol + NAD(+) + n H(+)(out). The catalysed reaction is a plastoquinone + NADPH + (n+1) H(+)(in) = a plastoquinol + NADP(+) + n H(+)(out). Its function is as follows. NDH shuttles electrons from NAD(P)H:plastoquinone, via FMN and iron-sulfur (Fe-S) centers, to quinones in the photosynthetic chain and possibly in a chloroplast respiratory chain. The immediate electron acceptor for the enzyme in this species is believed to be plastoquinone. Couples the redox reaction to proton translocation, and thus conserves the redox energy in a proton gradient. This chain is NAD(P)H-quinone oxidoreductase subunit 4L, chloroplastic, found in Dioscorea elephantipes (Elephant's foot yam).